A 100-amino-acid chain; its full sequence is MEAGSSNSSGQLSGRVVDTRGKHRIQAELKRLEQEARFLEEELEQLEKMDNASASCKEFLDSVDSKPDPLLPETTGPVNATWDQWFEGPKEAKRCGCSIL.

Residue M1 is modified to N-acetylmethionine. A coiled-coil region spans residues 19 to 55 (TRGKHRIQAELKRLEQEARFLEEELEQLEKMDNASAS). The region spanning 21 to 100 (GKHRIQAELK…EAKRCGCSIL (80 aa)) is the G protein gamma domain. The interval 90-96 (KEAKRCG) is regulates lipidation and cell membrane subcellular localization. The S-palmitoyl cysteine moiety is linked to residue C95. C97 is subject to Cysteine methyl ester. C97 is lipidated: S-farnesyl cysteine. A propeptide spans 98 to 100 (SIL) (removed in mature form).

In terms of assembly, g proteins are composed of 3 units, alpha, beta and gamma. GPG1 interacts with the beta subunit GB1. The dimer GB1-GG2 interacts with NDL1, NDL2 and NDL3. Binds to NUDT7. Mostly expressed in roots (excluded from the stele), seedlings (especially at the hypocotyl/root junction), floral stems, floral buds, flowers and siliques, and, to a lower extent, in leaves (restricted to guard cells). Also present in hydathods.

It localises to the cell membrane. Guanine nucleotide-binding proteins (G proteins) are involved as a modulator or transducer in various transmembrane signaling systems. The beta and gamma chains are required for the GTPase activity, for replacement of GDP by GTP, and for G protein-effector interaction. Involved in the abscisic acid (ABA) and ethylene signaling pathways. Regulates basipetal transport of auxin (IAA) in roots and hypocotyls, and thus modulates root architecture (e.g. lateral root formation). The heterotrimeric G-protein controls defense responses to necrotrophic and vascular fungi probably by modulating cell wall-related genes expression; involved in resistance to Plectosphaerella cucumerina. The chain is Guanine nucleotide-binding protein subunit gamma 2 (GG2) from Arabidopsis thaliana (Mouse-ear cress).